The following is a 337-amino-acid chain: 1-aminocyclopropane-1-carboxylate deaminase (337 aa).

K50 carries the post-translational modification N6-(pyridoxal phosphate)lysine.

It belongs to the ACC deaminase/D-cysteine desulfhydrase family. In terms of assembly, homotrimer. The cofactor is pyridoxal 5'-phosphate.

It catalyses the reaction 1-aminocyclopropane-1-carboxylate + H2O = 2-oxobutanoate + NH4(+). Functionally, catalyzes a cyclopropane ring-opening reaction, the irreversible conversion of 1-aminocyclopropane-1-carboxylate (ACC) to ammonia and alpha-ketobutyrate. Allows growth on ACC as a nitrogen source. This chain is 1-aminocyclopropane-1-carboxylate deaminase, found in Mesorhizobium japonicum (strain LMG 29417 / CECT 9101 / MAFF 303099) (Mesorhizobium loti (strain MAFF 303099)).